The sequence spans 217 residues: Adenylate kinase (217 aa).

G10–T15 is a binding site for ATP. The tract at residues A30–V59 is NMP. Residues T31, R36, L57 to V59, G85 to R88, and Q92 each bind AMP. An LID region spans residues G126–D163. R127 contributes to the ATP binding site. Residues C130 and C133 each contribute to the Zn(2+) site. An ATP-binding site is contributed by V136–Y137. Zn(2+)-binding residues include C150 and D153. 2 residues coordinate AMP: R160 and R171. Position 199 (Q199) interacts with ATP.

The protein belongs to the adenylate kinase family. In terms of assembly, monomer.

The protein localises to the cytoplasm. The catalysed reaction is AMP + ATP = 2 ADP. It participates in purine metabolism; AMP biosynthesis via salvage pathway; AMP from ADP: step 1/1. Its function is as follows. Catalyzes the reversible transfer of the terminal phosphate group between ATP and AMP. Plays an important role in cellular energy homeostasis and in adenine nucleotide metabolism. The sequence is that of Adenylate kinase from Phytoplasma australiense.